We begin with the raw amino-acid sequence, 284 residues long: Bifunctional protein FolD 1 (284 aa).

NADP(+) is bound by residues 166-168 (GAS) and I232.

It belongs to the tetrahydrofolate dehydrogenase/cyclohydrolase family. As to quaternary structure, homodimer.

The catalysed reaction is (6R)-5,10-methylene-5,6,7,8-tetrahydrofolate + NADP(+) = (6R)-5,10-methenyltetrahydrofolate + NADPH. It carries out the reaction (6R)-5,10-methenyltetrahydrofolate + H2O = (6R)-10-formyltetrahydrofolate + H(+). It functions in the pathway one-carbon metabolism; tetrahydrofolate interconversion. Its function is as follows. Catalyzes the oxidation of 5,10-methylenetetrahydrofolate to 5,10-methenyltetrahydrofolate and then the hydrolysis of 5,10-methenyltetrahydrofolate to 10-formyltetrahydrofolate. The polypeptide is Bifunctional protein FolD 1 (Pseudomonas savastanoi pv. phaseolicola (strain 1448A / Race 6) (Pseudomonas syringae pv. phaseolicola (strain 1448A / Race 6))).